The following is a 193-amino-acid chain: Imidazoleglycerol-phosphate dehydratase (193 aa).

The protein belongs to the imidazoleglycerol-phosphate dehydratase family.

It localises to the cytoplasm. The enzyme catalyses D-erythro-1-(imidazol-4-yl)glycerol 3-phosphate = 3-(imidazol-4-yl)-2-oxopropyl phosphate + H2O. Its pathway is amino-acid biosynthesis; L-histidine biosynthesis; L-histidine from 5-phospho-alpha-D-ribose 1-diphosphate: step 6/9. The sequence is that of Imidazoleglycerol-phosphate dehydratase from Sulfolobus acidocaldarius (strain ATCC 33909 / DSM 639 / JCM 8929 / NBRC 15157 / NCIMB 11770).